Here is a 526-residue protein sequence, read N- to C-terminus: ATP synthase subunit alpha (526 aa).

ATP is bound at residue 171-178 (GDRQTGKT).

This sequence belongs to the ATPase alpha/beta chains family. In terms of assembly, F-type ATPases have 2 components, CF(1) - the catalytic core - and CF(0) - the membrane proton channel. CF(1) has five subunits: alpha(3), beta(3), gamma(1), delta(1), epsilon(1). CF(0) has four main subunits: a(1), b(1), b'(1) and c(9-12).

It is found in the cell inner membrane. The catalysed reaction is ATP + H2O + 4 H(+)(in) = ADP + phosphate + 5 H(+)(out). In terms of biological role, produces ATP from ADP in the presence of a proton gradient across the membrane. The alpha chain is a regulatory subunit. This is ATP synthase subunit alpha from Chlorobium chlorochromatii (strain CaD3).